Reading from the N-terminus, the 366-residue chain is Dual-specificity RNA methyltransferase RlmN (366 aa).

Catalysis depends on Glu91, which acts as the Proton acceptor. Residues Glu97–Asp333 enclose the Radical SAM core domain. The cysteines at positions 104 and 338 are disulfide-linked. [4Fe-4S] cluster is bound by residues Cys111, Cys115, and Cys118. S-adenosyl-L-methionine-binding positions include Gly164 to Glu165, Ser196, Ser218 to His220, and Asn295. Cys338 functions as the S-methylcysteine intermediate in the catalytic mechanism.

It belongs to the radical SAM superfamily. RlmN family. The cofactor is [4Fe-4S] cluster.

It localises to the cytoplasm. It carries out the reaction adenosine(2503) in 23S rRNA + 2 reduced [2Fe-2S]-[ferredoxin] + 2 S-adenosyl-L-methionine = 2-methyladenosine(2503) in 23S rRNA + 5'-deoxyadenosine + L-methionine + 2 oxidized [2Fe-2S]-[ferredoxin] + S-adenosyl-L-homocysteine. The enzyme catalyses adenosine(37) in tRNA + 2 reduced [2Fe-2S]-[ferredoxin] + 2 S-adenosyl-L-methionine = 2-methyladenosine(37) in tRNA + 5'-deoxyadenosine + L-methionine + 2 oxidized [2Fe-2S]-[ferredoxin] + S-adenosyl-L-homocysteine. Specifically methylates position 2 of adenine 2503 in 23S rRNA and position 2 of adenine 37 in tRNAs. m2A2503 modification seems to play a crucial role in the proofreading step occurring at the peptidyl transferase center and thus would serve to optimize ribosomal fidelity. The polypeptide is Dual-specificity RNA methyltransferase RlmN (Laribacter hongkongensis (strain HLHK9)).